The primary structure comprises 338 residues: Mitoferrin-1 (338 aa).

The disordered stretch occupies residues M1–S42. The span at R15 to G26 shows a compositional bias: basic and acidic residues. 3 Solcar repeats span residues A43–T131, N141–Q225, and Y232–F326. 6 helical membrane-spanning segments follow: residues V45–Y64, G106–Y125, H143–N162, S200–Y219, P234–T253, and G301–Y320.

The protein belongs to the mitochondrial carrier (TC 2.A.29) family. In terms of assembly, interacts with ACB10; this interaction stabilizes SLC25A37 and enhances the function of SLC25A37 to import mitochondrial iron during erythroid differentiation.

The protein localises to the mitochondrion inner membrane. It carries out the reaction Fe(2+)(in) = Fe(2+)(out). Functionally, mitochondrial iron transporter that specifically mediates iron uptake in developing erythroid cells, thereby playing an essential role in heme biosynthesis. The sequence is that of Mitoferrin-1 (SLC25A37) from Homo sapiens (Human).